The chain runs to 499 residues: Bestrophin homolog 22 (499 aa).

Transmembrane regions (helical) follow at residues 29–49, 77–97, 235–255, and 267–287; these read WKAVFGQLAVWTAVFLLISCI, IPLTFLLGFFVSFVVARWGSI, LVYPQVIFLAVRIYFMICLIG, and GIDLWLPITTMVQFLVYMGWM. The segment covering 417 to 432 has biased composition (basic and acidic residues); the sequence is HNAKHAKQRGLERANS. Disordered regions lie at residues 417 to 455 and 474 to 499; these read HNAKHAKQRGLERANSPDKCLSKMRSRSNGKFRTSANGS and TSNPNQVHPHSIAVFPPEEQQTTSRH.

Belongs to the anion channel-forming bestrophin (TC 1.A.46) family. Calcium-sensitive chloride channel subfamily. In terms of assembly, forms oligomers.

The protein resides in the cell membrane. In terms of biological role, forms chloride channels. The chain is Bestrophin homolog 22 (best-22) from Caenorhabditis elegans.